Consider the following 278-residue polypeptide: Octanoyltransferase LipM (278 aa).

The region spanning 33-248 (KKMPPTIRFY…GFEKGLDVEL (216 aa)) is the BPL/LPL catalytic domain. C150 (acyl-thioester intermediate) is an active-site residue.

The protein belongs to the octanoyltransferase LipM family. Monomer.

It catalyses the reaction octanoyl-[ACP] + L-lysyl-[protein] = N(6)-octanoyl-L-lysyl-[protein] + holo-[ACP] + H(+). It participates in protein modification; protein lipoylation via endogenous pathway; protein N(6)-(lipoyl)lysine from octanoyl-[acyl-carrier-protein]. Its function is as follows. Catalyzes the transfer of endogenously produced octanoic acid from octanoyl-acyl-carrier-protein onto the lipoyl domain of GcvH, an intermediate carrier during protein lipoylation. In Bacillus anthracis, this protein is Octanoyltransferase LipM.